The sequence spans 440 residues: Calcium/calmodulin-regulated receptor-like kinase 1 (440 aa).

A helical membrane pass occupies residues 8–28; it reads LIVGISLGLVIGVVLAISALF. The interval 28 to 228 is calmodulin binding; that stretch reads FCFRYHRKKS…ARGLEYLHDG (201 aa). A Protein kinase domain is found at 113 to 380; sequence CNFTTLIGQG…DIVQVLTRVI (268 aa). Residues 119 to 127 and K141 contribute to the ATP site; that span reads IGQGAFGPV. Position 186 is a phosphotyrosine (Y186). The active-site Proton acceptor is D237. A Phosphoserine modification is found at S241. At T274 the chain carries Phosphothreonine. At Y282 the chain carries Phosphotyrosine. The interval 369 to 440 is calmodulin binding; the sequence is MRDIVQVLTR…DSSIAEDVIL (72 aa). Positions 386–427 are disordered; it reads RKRQKNSPSPSPRLPPPPPIVEESEGELTANGSLRSEIHRRD. Over residues 394 to 405 the composition is skewed to pro residues; that stretch reads SPSPRLPPPPPI.

It belongs to the protein kinase superfamily. Ser/Thr protein kinase family. As to quaternary structure, interacts with calmodulin (CaM) in a calcium- (Ca(2+)-) dependent manner. Binds to MEKK1. In terms of tissue distribution, similar transcript expression levels in seedlings, roots, leaves, stems and flowers, and lower levels in siliques, but protein accumulates mostly in 7-day-old seedlings, old roots and young leaves and, to a lower extent, in young roots, old leaves, flowers and siliques (at protein level).

The protein resides in the cell membrane. It is found in the endosome membrane. The enzyme catalyses L-seryl-[protein] + ATP = O-phospho-L-seryl-[protein] + ADP + H(+). The catalysed reaction is L-threonyl-[protein] + ATP = O-phospho-L-threonyl-[protein] + ADP + H(+). Its activity is regulated as follows. Kinase activity is stimulated by calcium/calmodulin, but blocked by chlorpromazine. Functionally, required for cold tolerance, via the activation of MAP kinases activity. Phosphorylates and activates MEKK1 in response to cold in a calcium-dependent manner. The polypeptide is Calcium/calmodulin-regulated receptor-like kinase 1 (Arabidopsis thaliana (Mouse-ear cress)).